The sequence spans 308 residues: tRNA dimethylallyltransferase (308 aa).

10–17 (GPTGVGKT) provides a ligand contact to ATP. Position 12–17 (12–17 (TGVGKT)) interacts with substrate. The interval 35–38 (DSRQ) is interaction with substrate tRNA.

This sequence belongs to the IPP transferase family. In terms of assembly, monomer. Mg(2+) is required as a cofactor.

The catalysed reaction is adenosine(37) in tRNA + dimethylallyl diphosphate = N(6)-dimethylallyladenosine(37) in tRNA + diphosphate. In terms of biological role, catalyzes the transfer of a dimethylallyl group onto the adenine at position 37 in tRNAs that read codons beginning with uridine, leading to the formation of N6-(dimethylallyl)adenosine (i(6)A). In Fervidobacterium nodosum (strain ATCC 35602 / DSM 5306 / Rt17-B1), this protein is tRNA dimethylallyltransferase.